The sequence spans 277 residues: Orotidine 5'-phosphate decarboxylase (277 aa).

Residues aspartate 40, 62 to 64 (KTH), 93 to 102 (DRKFIDIGNT), tyrosine 229, and arginine 247 contribute to the substrate site. Lysine 95 serves as the catalytic Proton donor.

Belongs to the OMP decarboxylase family.

It catalyses the reaction orotidine 5'-phosphate + H(+) = UMP + CO2. It functions in the pathway pyrimidine metabolism; UMP biosynthesis via de novo pathway; UMP from orotate: step 2/2. This is Orotidine 5'-phosphate decarboxylase (pyrG) from Aspergillus awamori (Black koji mold).